Reading from the N-terminus, the 38-residue chain is Large ribosomal subunit protein bL36 (38 aa).

The protein belongs to the bacterial ribosomal protein bL36 family.

The sequence is that of Large ribosomal subunit protein bL36 from Prosthecochloris aestuarii (strain DSM 271 / SK 413).